The following is a 353-amino-acid chain: Protein XRP2 (353 aa).

The disordered stretch occupies residues methionine 1 to lysine 37. Residue glycine 2 is the site of N-myristoyl glycine attachment. The S-palmitoyl cysteine moiety is linked to residue cysteine 3. A compositionally biased stretch (basic and acidic residues) spans glutamate 25–lysine 37. One can recognise a C-CAP/cofactor C-like domain in the interval proline 27–proline 182. GTP-binding positions include glycine 101–serine 102 and glutamine 118–arginine 121.

Belongs to the TBCC family. Post-translationally, myristoylated on Gly-2; which may be required for membrane targeting. In terms of processing, palmitoylated on Cys-3; which may be required for plasma membrane targeting.

It is found in the cell membrane. Acts as a GTPase-activating protein (GAP) for tubulin in concert with tubulin-specific chaperone C, but does not enhance tubulin heterodimerization. Acts as a GTPase-activating protein. May act as guanine nucleotide dissociation inhibitor towards ADP-ribosylation factor-like proteins. The sequence is that of Protein XRP2 (rp2) from Xenopus laevis (African clawed frog).